Here is a 513-residue protein sequence, read N- to C-terminus: Abl interactor 2 (513 aa).

The residue at position 40 (S40) is a Phosphoserine. A t-SNARE coiled-coil homology domain is found at 45-107; that stretch reads RALEETKAYT…DIHKEKVARR (63 aa). The disordered stretch occupies residues 167–431; it reads KMGGLPRTTP…PPEDYEEEEA (265 aa). Residues 174–185 are compositionally biased toward pro residues; that stretch reads TTPPTQKPPSPP. Phosphoserine is present on residues S183 and S227. Residues 217-241 show a composition bias toward polar residues; the sequence is PTRNMAPSQQSPVRTASVNQRNRTY. Residues 242 to 272 show a composition bias toward low complexity; it reads SSSGSSGGSHPSSRSSSRENSGSGSVGVPIA. Pro residues predominate over residues 273–282; the sequence is VPTPSPPSVF. Residues 283–325 show a composition bias toward low complexity; that stretch reads PAPAGSAGTPPLPATSASAPAPLVPATVPSSTAPNAAAGGAPN. T361 is modified (phosphothreonine). A Phosphoserine modification is found at S368. The span at 376–399 shows a compositional bias: polar residues; the sequence is SITSQTSLQNQMNGGPFYSQNPVS. Positions 400-409 are enriched in pro residues; sequence DTPPPPPPVE. An SH3 domain is found at 451-510; sequence SYLEKVVAIYDYTKDKEDELSFQEGAIIYVIKKNDDGWYEGVMNGVTGLFPGNYVESIMH.

It belongs to the ABI family. Component of the WAVE complex composed of ABI2, CYFIP1 or CYFIP2, BRK1, NCKAP1 and WASF1/WAVE1. Within the complex, a heterodimer containing NCKAP1 and CYFIP1 interacts with a heterotrimer formed by WAVE1, ABI2 and BRK1. CYFIP2 binds to activated RAC1 which causes the complex to dissociate, releasing activated WASF1. Interacts (via SH3 domain) with ABL1 and ABL2. In terms of assembly, (Microbial infection) Interacts with human cytomegalovirus UL135. Post-translationally, phosphorylated by ABL1. In terms of tissue distribution, widely expressed. Abundant in testes, ovary, thymus, and colon, with lower but detectable levels in prostate, peripheral blood leukocytes, and spleen.

It is found in the cytoplasm. The protein localises to the nucleus. Its subcellular location is the cell projection. The protein resides in the lamellipodium. It localises to the filopodium. It is found in the cytoskeleton. The protein localises to the cell junction. Its subcellular location is the adherens junction. In terms of biological role, regulator of actin cytoskeleton dynamics underlying cell motility and adhesion. Functions as a component of the WAVE complex, which activates actin nucleating machinery Arp2/3 to drive lamellipodia formation. Acts as a regulator and substrate of nonreceptor tyrosine kinases ABL1 and ABL2 involved in processes linked to cell growth and differentiation. Positively regulates ABL1-mediated phosphorylation of ENAH, which is required for proper polymerization of nucleated actin filaments at the leading edge. Contributes to the regulation of actin assembly at the tips of neuron projections. In particular, controls dendritic spine morphogenesis and may promote dendritic spine specification toward large mushroom-type spines known as repositories of memory in the brain. In hippocampal neurons, may mediate actin-dependent BDNF-NTRK2 early endocytic trafficking that triggers dendrite outgrowth. Participates in ocular lens morphogenesis, likely by regulating lamellipodia-driven adherens junction formation at the epithelial cell-secondary lens fiber interface. Also required for nascent adherens junction assembly in epithelial cells. The polypeptide is Abl interactor 2 (Homo sapiens (Human)).